The primary structure comprises 239 residues: Carboxy-S-adenosyl-L-methionine synthase (239 aa).

S-adenosyl-L-methionine-binding positions include tyrosine 35, 64 to 66 (GSS), 114 to 115 (DL), asparagine 129, and arginine 196.

The protein belongs to the class I-like SAM-binding methyltransferase superfamily. Cx-SAM synthase family. As to quaternary structure, homodimer.

It carries out the reaction prephenate + S-adenosyl-L-methionine = carboxy-S-adenosyl-L-methionine + 3-phenylpyruvate + H2O. Functionally, catalyzes the conversion of S-adenosyl-L-methionine (SAM) to carboxy-S-adenosyl-L-methionine (Cx-SAM). This chain is Carboxy-S-adenosyl-L-methionine synthase, found in Helicobacter hepaticus (strain ATCC 51449 / 3B1).